A 418-amino-acid polypeptide reads, in one-letter code: Aspartate aminotransferase 1 (418 aa).

At K264 the chain carries N6-(pyridoxal phosphate)lysine.

This sequence belongs to the class-I pyridoxal-phosphate-dependent aminotransferase family. As to quaternary structure, homodimer. Pyridoxal 5'-phosphate serves as cofactor. In terms of tissue distribution, nodules, roots, stems and leaves, in decreasing order of aspartate aminotransferase 1 concentration. Is the predominant aspartate aminotransferase isoenzyme in roots.

It is found in the cytoplasm. It carries out the reaction L-aspartate + 2-oxoglutarate = oxaloacetate + L-glutamate. Functionally, important for the metabolism of amino acids and Krebs-cycle related organic acids. In plants, it is involved in nitrogen metabolism and in aspects of carbon and energy metabolism. The polypeptide is Aspartate aminotransferase 1 (AAT-1) (Medicago sativa (Alfalfa)).